The sequence spans 403 residues: S-adenosylmethionine synthase (403 aa).

Histidine 17 provides a ligand contact to ATP. Aspartate 19 lines the Mg(2+) pocket. Residue glutamate 45 coordinates K(+). L-methionine is bound by residues glutamate 58 and glutamine 104. The interval 104-114 is flexible loop; the sequence is QSPDIAQGVDT. Residues 179–181, 250–251, aspartate 259, 265–266, alanine 282, and lysine 286 contribute to the ATP site; these read DGK, KF, and RK. Aspartate 259 is an L-methionine binding site. Residue lysine 290 coordinates L-methionine.

The protein belongs to the AdoMet synthase family. Homotetramer; dimer of dimers. Mg(2+) is required as a cofactor. Requires K(+) as cofactor.

It is found in the cytoplasm. It carries out the reaction L-methionine + ATP + H2O = S-adenosyl-L-methionine + phosphate + diphosphate. It functions in the pathway amino-acid biosynthesis; S-adenosyl-L-methionine biosynthesis; S-adenosyl-L-methionine from L-methionine: step 1/1. Functionally, catalyzes the formation of S-adenosylmethionine (AdoMet) from methionine and ATP. The overall synthetic reaction is composed of two sequential steps, AdoMet formation and the subsequent tripolyphosphate hydrolysis which occurs prior to release of AdoMet from the enzyme. This chain is S-adenosylmethionine synthase, found in Mycobacterium tuberculosis (strain ATCC 25177 / H37Ra).